A 427-amino-acid chain; its full sequence is MSEEQKTISISELESMNIKQLYEIAKSLGIPRYTSMRKRDLIFAILKAQTESTGYFFGEGVLEIHPEGFGFLRRIEDNLLPSNDDIYISPSQIRKFNLNTGDIISGVIRKPKEGEKYFAMIKIEAINYRPVEAVNDRVNFDNLTPDYPRERFILETDPKIYSTRLIDLFAPIGKGQRGMIVAPPKAGKTTILKEIANGIAENHPDTIRIILLIDERPEEVTDIRESTNAIVIAAPFDMPPDKQVKVAELTLEMAKRLVEFNYDVVILLDSLTRLARVYNIVVPPSGKLLTGGVDPAALYKPKRFFGAARNTREGGSLTIIATALVETGSKMDEVIFEEFKGTGNMELVLSRQLANKRIFPAINLLLSGTRREELLLDEETLKKVWLLRRMLSAMTEEEGLTLILNKLSETSSNEEFLKLIDKEKARY.

The region spanning 55–130 is the Rho RNA-BD domain; it reads YFFGEGVLEI…IKIEAINYRP (76 aa). ATP is bound by residues 173–178, 185–190, and R216; these read GKGQRG and KAGKTT.

Belongs to the Rho family. In terms of assembly, homohexamer. The homohexamer assembles into an open ring structure.

Facilitates transcription termination by a mechanism that involves Rho binding to the nascent RNA, activation of Rho's RNA-dependent ATPase activity, and release of the mRNA from the DNA template. The sequence is that of Transcription termination factor Rho from Thermotoga maritima (strain ATCC 43589 / DSM 3109 / JCM 10099 / NBRC 100826 / MSB8).